Reading from the N-terminus, the 284-residue chain is L-ribulose-5-phosphate 3-epimerase UlaE (284 aa).

It belongs to the L-ribulose-5-phosphate 3-epimerase family.

It carries out the reaction L-ribulose 5-phosphate = L-xylulose 5-phosphate. It functions in the pathway cofactor degradation; L-ascorbate degradation; D-xylulose 5-phosphate from L-ascorbate: step 3/4. In terms of biological role, catalyzes the isomerization of L-xylulose-5-phosphate to L-ribulose-5-phosphate. Is involved in the anaerobic L-ascorbate utilization. In Salmonella typhi, this protein is L-ribulose-5-phosphate 3-epimerase UlaE.